The following is a 313-amino-acid chain: Nucleoside diphosphate-linked moiety X motif 6 (313 aa).

Residues T138 to Y270 enclose the Nudix hydrolase domain.

This sequence belongs to the Nudix hydrolase family. Monomer and homodimer.

The protein resides in the cytoplasm. It localises to the nucleus. Its subcellular location is the mitochondrion. Functionally, may contribute to the regulation of cell proliferation. This is Nucleoside diphosphate-linked moiety X motif 6 (Nudt6) from Mus musculus (Mouse).